The sequence spans 1141 residues: Translocase of chloroplast 125, chloroplastic (1141 aa).

2 disordered regions span residues 1 to 177 (MDAL…ISGY) and 325 to 431 (GFVE…EANE). Composition is skewed to basic and acidic residues over residues 57–72 (RVPE…KRDG) and 107–121 (IDGR…REDL). Residues 132 to 150 (YDDDDDDEEEEEDGSEEGE) are compositionally biased toward acidic residues. The span at 151–167 (STSSSIINSEYSSSASN) shows a compositional bias: low complexity. Over residues 328 to 353 (EAEEAESDVFTEGEDGYDDEDEDGDI) the composition is skewed to acidic residues. Composition is skewed to low complexity over residues 389 to 401 (RSSA…TTAT) and 408 to 429 (TASS…SSEA). Residues 505–734 (DFACTILVLG…KLQEASTPGK (230 aa)) form the AIG1-type G domain. The G1 stretch occupies residues 514–521 (GKTGVGKS). 517 to 522 (GVGKSA) is a GTP binding site. Ser-521 serves as a coordination point for Mg(2+). Positions 541-545 (STTKV) are G2. Positions 561-564 (DTPG) are G3. The segment at 633-636 (THAS) is G4. GTP is bound by residues His-634 and 682–683 (EN). Residues 682-684 (ENH) form a G5 region. Disordered stretches follow at residues 758 to 795 (QLKM…PFRP) and 832 to 871 (IRRR…AVPM). Residues 770 to 789 (EDSDDDSDEEDEEEGDEYDD) are compositionally biased toward acidic residues. The span at 832-841 (IRRRRERKKQ) shows a compositional bias: basic residues. The chain crosses the membrane as a helical span at residues 1116–1136 (MVLIGIVPILRSLINCRFGFG).

This sequence belongs to the TRAFAC class TrmE-Era-EngA-EngB-Septin-like GTPase superfamily. AIG1/Toc34/Toc159-like paraseptin GTPase family. TOC159 subfamily. In terms of assembly, part of the TOC core complex. Mg(2+) serves as cofactor.

It localises to the plastid. The protein resides in the chloroplast outer membrane. Its function is as follows. GTPase involved in protein precursor import into chloroplasts. Seems to recognize chloroplast-destined precursor proteins and regulate their presentation to the translocation channel through GTP hydrolysis. Probably specialized in the import of nuclear encoded non-photosynthetic preproteins from the cytoplasm to the chloroplast. The protein is Translocase of chloroplast 125, chloroplastic of Physcomitrium patens (Spreading-leaved earth moss).